A 281-amino-acid polypeptide reads, in one-letter code: Transmembrane protein 41A-A (281 aa).

A signal peptide spans 1–22 (MRSLVGLVAVIVTATFYLYSLS). A disordered region spans residues 32–56 (HKQSHEGETTDAKDGDEPSEMETAS). Over residues 34–47 (QSHEGETTDAKDGD) the composition is skewed to basic and acidic residues. A run of 5 helical transmembrane segments spans residues 84 to 104 (GYVL…AIPG), 107 to 127 (FLNI…LTCV), 170 to 190 (LFFF…FLNM), 197 to 217 (IPVT…NFIC), and 236 to 256 (WSVV…GALI).

It belongs to the TMEM41 family.

Its subcellular location is the membrane. This chain is Transmembrane protein 41A-A (tmem41aa), found in Danio rerio (Zebrafish).